We begin with the raw amino-acid sequence, 351 residues long: MSGARPLTVVVVDDSLTTRALIAAALRRDPRVKIVGTAGTPFEARDLIVRLNPDVLTLDFEMPSMNGLQFLEKIMRLRPMPVVMVSGHLSSHRGLVEQSLRMGAAEWYSKTTTANGEDPFAGLGDAIVRAAAMKQQAPVPVATDSANRTVPKIGTVVGIGASTGGVEALTDVLGHFPVACPPTVIVQHMPRQFSESFARRLDRIVKPEVRLAEEGDMLKPGTVYVASGGERHLRVRCGARSGEYVCQLVAAPPVNGHRPSVDELFYSLATTVGKNAVGVILTGMECDGAQGLLAMRHAGASTIGQDRASSVIYGMPRAAYELGAVETQLPLSAIGPAILNLCERRSLETYP.

A Response regulatory domain is found at 8-125 (TVVVVDDSLT…GEDPFAGLGD (118 aa)). Position 59 is a 4-aspartylphosphate (Asp-59). Residues 151 to 345 (PKIGTVVGIG…PAILNLCERR (195 aa)) enclose the CheB-type methylesterase domain. Residues Ser-162, His-188, and Asp-287 contribute to the active site.

This sequence belongs to the CheB family. Post-translationally, phosphorylated by CheA. Phosphorylation of the N-terminal regulatory domain activates the methylesterase activity.

It is found in the cytoplasm. It catalyses the reaction [protein]-L-glutamate 5-O-methyl ester + H2O = L-glutamyl-[protein] + methanol + H(+). The catalysed reaction is L-glutaminyl-[protein] + H2O = L-glutamyl-[protein] + NH4(+). Its function is as follows. Involved in chemotaxis. Part of a chemotaxis signal transduction system that modulates chemotaxis in response to various stimuli. Catalyzes the demethylation of specific methylglutamate residues introduced into the chemoreceptors (methyl-accepting chemotaxis proteins or MCP) by CheR. Also mediates the irreversible deamidation of specific glutamine residues to glutamic acid. In Gluconobacter oxydans (strain 621H) (Gluconobacter suboxydans), this protein is Protein-glutamate methylesterase/protein-glutamine glutaminase.